Consider the following 557-residue polypeptide: Polypyrimidine tract-binding protein 1 (557 aa).

An N-acetylmethionine modification is found at Met-1. Residue Ser-16 is modified to Phosphoserine. RRM domains lie at 59–143 (RVIH…SSPN), 184–260 (LRII…FSKL), and 363–437 (SVLL…LSKH). Lys-65 is covalently cross-linked (Glycyl lysine isopeptide (Lys-Gly) (interchain with G-Cter in SUMO2)). Tyr-127 carries the phosphotyrosine modification. Thr-138 carries the phosphothreonine modification. Ser-141 carries the phosphoserine modification. Residue Lys-218 forms a Glycyl lysine isopeptide (Lys-Gly) (interchain with G-Cter in SUMO2) linkage. Ser-459 is subject to Phosphoserine. In terms of domain architecture, RRM 4 spans 480–555 (ATLHLSNIPP…HHLRVSFSKS (76 aa)).

Monomer. Part of a ternary complex containing KHSRP, PTBP1, PTBP2 and HNRPH1. Interacts with RAVER1 and SFPQ. Interacts with IVNS1ABP (via BACK domain); the interaction is direct.

Its subcellular location is the nucleus. In terms of biological role, plays a role in pre-mRNA splicing and in the regulation of alternative splicing events. Activates exon skipping of its own pre-mRNA during muscle cell differentiation. Binds to the polypyrimidine tract of introns. May promote RNA looping when bound to two separate polypyrimidine tracts in the same pre-mRNA. May promote the binding of U2 snRNP to pre-mRNA. Cooperates with RAVER1 to modulate switching between mutually exclusive exons during maturation of the TPM1 pre-mRNA. Represses the splicing of MAPT/Tau exon 10. Binds to polypyrimidine-rich controlling element (PCE) of CFTR and promotes exon skipping of CFTR exon 9, thereby antagonizing TIA1 and its role in exon inclusion of CFTR exon 9. Plays a role in the splicing of pyruvate kinase PKM by binding repressively to a polypyrimidine tract flanking PKM exon 9, inhibiting exon 9 inclusion and resulting in exon 10 inclusion and production of the PKM M2 isoform. In case of infection by picornaviruses, binds to the viral internal ribosome entry site (IRES) and stimulates the IRES-mediated translation. This chain is Polypyrimidine tract-binding protein 1 (PTBP1), found in Homo sapiens (Human).